The primary structure comprises 83 residues: RNA-binding protein Hfq (83 aa).

The region spanning 11–71 is the Sm domain; that stretch reads DVFLNYIRKN…ISTIMPASPV (61 aa).

Belongs to the Hfq family. As to quaternary structure, homohexamer.

In terms of biological role, RNA chaperone that binds small regulatory RNA (sRNAs) and mRNAs to facilitate mRNA translational regulation in response to envelope stress, environmental stress and changes in metabolite concentrations. Also binds with high specificity to tRNAs. This chain is RNA-binding protein Hfq, found in Rhodospirillum rubrum (strain ATCC 11170 / ATH 1.1.1 / DSM 467 / LMG 4362 / NCIMB 8255 / S1).